We begin with the raw amino-acid sequence, 103 residues long: Large ribosomal subunit protein bL21 (103 aa).

It belongs to the bacterial ribosomal protein bL21 family. Part of the 50S ribosomal subunit. Contacts protein L20.

Functionally, this protein binds to 23S rRNA in the presence of protein L20. In Rhodococcus jostii (strain RHA1), this protein is Large ribosomal subunit protein bL21.